The sequence spans 357 residues: MRRRGPEKEEEACGVWLDAAALKRRKTQTQLIKSSTKMLTLLPGERKAKISFTQRSCPSAGTRQTSIASFLTSQQGKTNGADQRSVSSHTESQTNKESKEDATQLEHLTQGLRADFMAPPLATSTPADIQEARLSPQSLKASCQHGIGTPYLTVPCLFRPDTSVCAGASKASLACSFAHDLESSCLLDQKEGEDSSCEREWLQGSKKNNYQSVERHSKTTGHKGHQLLDKTNLENVSAKRSRQAPVLQTYKDSRRGANMKAVKQSSCPIPGFSWDSERNDKDSWSQLFTEDSQGQRVIAHNSRAPFRDVTNDQNQGYGRVPNSLWAQCQDRTTQFNLQPDSLFTQDSEGNQVIRHQA.

Residues threonine 72–glutamine 93 are compositionally biased toward polar residues. The interval threonine 72–alanine 102 is disordered. The tract at residues glutamine 189–alanine 357 is interaction with AURKA. The interaction with RBBP8/CtIP stretch occupies residues lysine 281–alanine 357. At serine 292 the chain carries Phosphoserine.

Belongs to the AUNIP family. Interacts (via C-terminus) with AURKA (via C-terminus). Interacts (via N-terminus) with NIN; this interaction blocks NIN phosphorylation by both AURKA and GSK3B. Identified in a complex with NIN and AURKA. Interacts with RBBP8/CtIP.

The protein localises to the nucleus. It is found in the chromosome. The protein resides in the cytoplasm. Its subcellular location is the cytoskeleton. It localises to the microtubule organizing center. The protein localises to the centrosome. It is found in the spindle pole. Its function is as follows. DNA-binding protein that accumulates at DNA double-strand breaks (DSBs) following DNA damage and promotes DNA resection and homologous recombination. Serves as a sensor of DNA damage: binds DNA with a strong preference for DNA substrates that mimic structures generated at stalled replication forks, and anchors RBBP8/CtIP to DSB sites to promote DNA end resection and ensuing homologous recombination repair. Inhibits non-homologous end joining (NHEJ). Required for the dynamic movement of AURKA at the centrosomes and spindle apparatus during the cell cycle. In Bos taurus (Bovine), this protein is Aurora kinase A- and ninein-interacting protein.